Consider the following 184-residue polypeptide: ATP-dependent protease subunit HslV (184 aa).

Threonine 2 is an active-site residue. Positions 157, 160, and 163 each coordinate Na(+).

Belongs to the peptidase T1B family. HslV subfamily. In terms of assembly, a double ring-shaped homohexamer of HslV is capped on each side by a ring-shaped HslU homohexamer. The assembly of the HslU/HslV complex is dependent on binding of ATP.

It localises to the cytoplasm. It carries out the reaction ATP-dependent cleavage of peptide bonds with broad specificity.. With respect to regulation, allosterically activated by HslU binding. Functionally, protease subunit of a proteasome-like degradation complex believed to be a general protein degrading machinery. In Vibrio vulnificus (strain CMCP6), this protein is ATP-dependent protease subunit HslV.